The chain runs to 273 residues: Bis(5'-nucleosyl)-tetraphosphatase, symmetrical (273 aa).

The protein belongs to the Ap4A hydrolase family.

It carries out the reaction P(1),P(4)-bis(5'-adenosyl) tetraphosphate + H2O = 2 ADP + 2 H(+). In terms of biological role, hydrolyzes diadenosine 5',5'''-P1,P4-tetraphosphate to yield ADP. The sequence is that of Bis(5'-nucleosyl)-tetraphosphatase, symmetrical from Aliivibrio salmonicida (strain LFI1238) (Vibrio salmonicida (strain LFI1238)).